We begin with the raw amino-acid sequence, 499 residues long: T-cell activation inhibitor, mitochondrial (499 aa).

A coiled-coil region spans residues 206–233 (LRNSLPLRKELDRLKNELSELLQLSDIR).

As to expression, expressed in peripheral blood leukocytes, mainly in T-lymphocytes.

It is found in the mitochondrion. May regulate T-cell apoptosis. In Mus musculus (Mouse), this protein is T-cell activation inhibitor, mitochondrial (TCAIM).